An 82-amino-acid chain; its full sequence is Cytochrome b559 subunit alpha (82 aa).

A helical transmembrane segment spans residues 21-35 (VIHSVTIPSLFIAGW). Histidine 23 is a binding site for heme.

It belongs to the PsbE/PsbF family. Heterodimer of an alpha subunit and a beta subunit. PSII is composed of 1 copy each of membrane proteins PsbA, PsbB, PsbC, PsbD, PsbE, PsbF, PsbH, PsbI, PsbJ, PsbK, PsbL, PsbM, PsbT, PsbX, PsbY, PsbZ, Psb30/Ycf12, at least 3 peripheral proteins of the oxygen-evolving complex and a large number of cofactors. It forms dimeric complexes. Requires heme b as cofactor.

Its subcellular location is the plastid. It is found in the chloroplast thylakoid membrane. In terms of biological role, this b-type cytochrome is tightly associated with the reaction center of photosystem II (PSII). PSII is a light-driven water:plastoquinone oxidoreductase that uses light energy to abstract electrons from H(2)O, generating O(2) and a proton gradient subsequently used for ATP formation. It consists of a core antenna complex that captures photons, and an electron transfer chain that converts photonic excitation into a charge separation. The sequence is that of Cytochrome b559 subunit alpha from Ostreococcus tauri.